The following is a 564-amino-acid chain: 2-succinyl-5-enolpyruvyl-6-hydroxy-3-cyclohexene-1-carboxylate synthase (564 aa).

This sequence belongs to the TPP enzyme family. MenD subfamily. As to quaternary structure, homodimer. Mg(2+) serves as cofactor. It depends on Mn(2+) as a cofactor. The cofactor is thiamine diphosphate.

It carries out the reaction isochorismate + 2-oxoglutarate + H(+) = 5-enolpyruvoyl-6-hydroxy-2-succinyl-cyclohex-3-ene-1-carboxylate + CO2. It functions in the pathway quinol/quinone metabolism; 1,4-dihydroxy-2-naphthoate biosynthesis; 1,4-dihydroxy-2-naphthoate from chorismate: step 2/7. Its pathway is quinol/quinone metabolism; menaquinone biosynthesis. Its function is as follows. Catalyzes the thiamine diphosphate-dependent decarboxylation of 2-oxoglutarate and the subsequent addition of the resulting succinic semialdehyde-thiamine pyrophosphate anion to isochorismate to yield 2-succinyl-5-enolpyruvyl-6-hydroxy-3-cyclohexene-1-carboxylate (SEPHCHC). This is 2-succinyl-5-enolpyruvyl-6-hydroxy-3-cyclohexene-1-carboxylate synthase from Photorhabdus laumondii subsp. laumondii (strain DSM 15139 / CIP 105565 / TT01) (Photorhabdus luminescens subsp. laumondii).